A 115-amino-acid polypeptide reads, in one-letter code: Holo-[acyl-carrier-protein] synthase (115 aa).

Positions 8 and 50 each coordinate Mg(2+).

This sequence belongs to the P-Pant transferase superfamily. AcpS family. Mg(2+) serves as cofactor.

Its subcellular location is the cytoplasm. It carries out the reaction apo-[ACP] + CoA = holo-[ACP] + adenosine 3',5'-bisphosphate + H(+). Transfers the 4'-phosphopantetheine moiety from coenzyme A to a Ser of acyl-carrier-protein. The sequence is that of Holo-[acyl-carrier-protein] synthase from Pseudarthrobacter chlorophenolicus (strain ATCC 700700 / DSM 12829 / CIP 107037 / JCM 12360 / KCTC 9906 / NCIMB 13794 / A6) (Arthrobacter chlorophenolicus).